Here is a 700-residue protein sequence, read N- to C-terminus: MVAQYTVPVGKAANEHETAPRRNYQCREKPLVRPPNTKCSTVYEFVLECFQKNKNSNAMGWRDVKEIHEESKSVMKKVDGKETSVEKKWMYYELSHYHYNSFDQLTDIMHEIGRGLVKIGLKPNDDDKLHLYAATSHKWMKMFLGAQSQGIPVVTAYDTLGEKGLIHSLVQTGSKAIFTDNSLLPSLIKPVQAAQDVKYIIHFDSISSEDRRQSGKIYQSAHDAINRIKEVRPDIKTFSFDDILKLGKESCNEIDVHPPGKDDLCCIMYTSGSTGEPKGVVLKHSNVVAGVGGASLNVLKFVGNTDRVICFLPLAHIFELVFELLSFYWGACIGYATVKTLTSSSVRNCQGDLQEFKPTIMVGVAAVWETVRKGILNQIDNLPFLTKKIFWTAYNTKLNMQRLHIPGGGALGNLVFKKIRTATGGQLRYLLNGGSPISRDAQEFITNLICPMLIGYGLTETCASTTILDPANFELGVAGDLTGCVTVKLVDVEELGYFAKNNQGEVWITGANVTPEYYKNEEETSQALTSDGWFKTGDIGEWEANGHLKIIDRKKNLVKTMNGEYIALEKLESVYRSNEYVANICVYADQSKTKPVGIIVPNHAPLTKLAKKLGIMEQKDSSINIENYLEDAKLIKAVYSDLLKTGKDQGLVGIELLAGIVFFDGEWTPQNGFVTSAQKLKRKDILNAVKDKVDAVYSSS.

The interval 1-21 (MVAQYTVPVGKAANEHETAPR) is disordered. A Glycyl lysine isopeptide (Lys-Gly) (interchain with G-Cter in ubiquitin) cross-link involves residue K189. An ATP-binding site is contributed by 269–280 (YTSGSTGEPKGV). The short motif at 531–580 (DGWFKTGDIGEWEANGHLKIIDRKKNLVKTMNGEYIALEKLESVYRSNEY) is the FACS element.

The protein belongs to the ATP-dependent AMP-binding enzyme family. As to quaternary structure, interacts with FAT1. The cofactor is Mg(2+).

It localises to the lipid droplet. The protein localises to the cell membrane. It catalyses the reaction a long-chain fatty acid + ATP + CoA = a long-chain fatty acyl-CoA + AMP + diphosphate. The enzyme catalyses (9Z)-octadecenoate + ATP + CoA = (9Z)-octadecenoyl-CoA + AMP + diphosphate. It carries out the reaction hexadecanoate + ATP + CoA = hexadecanoyl-CoA + AMP + diphosphate. The catalysed reaction is (9Z)-hexadecenoate + ATP + CoA = (9Z)-hexadecenoyl-CoA + AMP + diphosphate. It catalyses the reaction tetradecanoate + ATP + CoA = tetradecanoyl-CoA + AMP + diphosphate. The enzyme catalyses (9Z)-tetradecenoate + ATP + CoA = (9Z)-tetradecenoyl-CoA + AMP + diphosphate. It carries out the reaction (9Z,12Z)-octadecadienoate + ATP + CoA = (9Z,12Z)-octadecadienoyl-CoA + AMP + diphosphate. The catalysed reaction is dodecanoate + ATP + CoA = dodecanoyl-CoA + AMP + diphosphate. It catalyses the reaction pentadecanoate + ATP + CoA = pentadecanoyl-CoA + AMP + diphosphate. The enzyme catalyses undecanoate + ATP + CoA = undecanoyl-CoA + AMP + diphosphate. It carries out the reaction heptadecanoate + ATP + CoA = heptadecanoyl-CoA + AMP + diphosphate. The catalysed reaction is octadecanoate + ATP + CoA = octadecanoyl-CoA + AMP + diphosphate. Activates long-chain fatty acids (LCFA) by esterification of the fatty acids into metabolically active CoA-thioesters for subsequent degradation or incorporation into phospholipids. Also facilitates the transport of LCFAs into the cell, either by active transport or by decreasing the intracellular LCFA concentration. It may supplement intracellular myristoyl-CoA pools from exogenous myristate. Preferentially acts on C12:0-C16:0 fatty acids with myristic and pentadecanic acid (C15:0) having the highest activities. Also involved in long-chain base (LCB) uptake of sphingolipids. In contrast ot LCFA uptake, LCB uptake does not require ATP, suggesting that the enzyme is directly involved in active LCB uptake. Involved in the sphingolipid-to-glycerolipid metabolic pathway, converting the sphingolipid metabolite hexadecenoic acid to hexadecenoyl-CoA, which is then further converted to glycerolipids. The protein is Long-chain-fatty-acid--CoA ligase 1 (FAA1) of Saccharomyces cerevisiae (strain ATCC 204508 / S288c) (Baker's yeast).